The following is a 435-amino-acid chain: Ribosomal protein uS12 methylthiotransferase RimO (435 aa).

Residues 3–113 (HKVGFVSLGC…VVNAVHQHLP (111 aa)) enclose the MTTase N-terminal domain. [4Fe-4S] cluster contacts are provided by cysteine 12, cysteine 48, cysteine 77, cysteine 144, cysteine 148, and cysteine 151. Residues 130–367 (LTPRHYAYLK…MQVQAEISRN (238 aa)) form the Radical SAM core domain. A TRAM domain is found at 370–435 (KNKIGSTQTV…DDYDLYASLV (66 aa)).

The protein belongs to the methylthiotransferase family. RimO subfamily. It depends on [4Fe-4S] cluster as a cofactor.

Its subcellular location is the cytoplasm. It catalyses the reaction L-aspartate(89)-[ribosomal protein uS12]-hydrogen + (sulfur carrier)-SH + AH2 + 2 S-adenosyl-L-methionine = 3-methylsulfanyl-L-aspartate(89)-[ribosomal protein uS12]-hydrogen + (sulfur carrier)-H + 5'-deoxyadenosine + L-methionine + A + S-adenosyl-L-homocysteine + 2 H(+). Its function is as follows. Catalyzes the methylthiolation of an aspartic acid residue of ribosomal protein uS12. This chain is Ribosomal protein uS12 methylthiotransferase RimO, found in Legionella pneumophila (strain Lens).